Here is a 292-residue protein sequence, read N- to C-terminus: Nitrogenase iron protein (292 aa).

An ATP-binding site is contributed by 8-15 (GKGGIGKS). Cys-96 serves as a coordination point for [4Fe-4S] cluster. The residue at position 99 (Arg-99) is an ADP-ribosylarginine; by dinitrogenase reductase ADP-ribosyltransferase. [4Fe-4S] cluster is bound at residue Cys-130.

This sequence belongs to the NifH/BchL/ChlL family. In terms of assembly, homodimer. The cofactor is [4Fe-4S] cluster. Post-translationally, the reversible ADP-ribosylation of Arg-99 inactivates the nitrogenase reductase and regulates nitrogenase activity.

It catalyses the reaction N2 + 8 reduced [2Fe-2S]-[ferredoxin] + 16 ATP + 16 H2O = H2 + 8 oxidized [2Fe-2S]-[ferredoxin] + 2 NH4(+) + 16 ADP + 16 phosphate + 6 H(+). The key enzymatic reactions in nitrogen fixation are catalyzed by the nitrogenase complex, which has 2 components: the iron protein and the molybdenum-iron protein. The chain is Nitrogenase iron protein from Synechococcus sp. (strain JA-3-3Ab) (Cyanobacteria bacterium Yellowstone A-Prime).